A 180-amino-acid chain; its full sequence is Cell division protein SepF (180 aa).

Positions 14 to 81 (NSEDDEEFDN…SKITPISKSS (68 aa)) are disordered. Positions 15 to 35 (SEDDEEFDNEDYYLDDEEEEE) are enriched in acidic residues. A compositionally biased stretch (basic and acidic residues) spans 57–68 (TRRDTTPKEKPV). Low complexity predominate over residues 69–79 (KTTSKITPISK).

The protein belongs to the SepF family. As to quaternary structure, homodimer. Interacts with FtsZ.

The protein resides in the cytoplasm. In terms of biological role, cell division protein that is part of the divisome complex and is recruited early to the Z-ring. Probably stimulates Z-ring formation, perhaps through the cross-linking of FtsZ protofilaments. Its function overlaps with FtsA. The sequence is that of Cell division protein SepF from Agathobacter rectalis (strain ATCC 33656 / DSM 3377 / JCM 17463 / KCTC 5835 / VPI 0990) (Eubacterium rectale).